The sequence spans 271 residues: 4-hydroxy-tetrahydrodipicolinate reductase (271 aa).

NAD(+)-binding positions include 11-16 (GGSGRM) and Glu-37. Arg-38 serves as a coordination point for NADP(+). Residues 101 to 103 (GTT) and 125 to 128 (APNM) each bind NAD(+). His-158 acts as the Proton donor/acceptor in catalysis. His-159 lines the (S)-2,3,4,5-tetrahydrodipicolinate pocket. Residue Lys-162 is the Proton donor of the active site. Residue 168–169 (GT) participates in (S)-2,3,4,5-tetrahydrodipicolinate binding.

The protein belongs to the DapB family.

It localises to the cytoplasm. The catalysed reaction is (S)-2,3,4,5-tetrahydrodipicolinate + NAD(+) + H2O = (2S,4S)-4-hydroxy-2,3,4,5-tetrahydrodipicolinate + NADH + H(+). It carries out the reaction (S)-2,3,4,5-tetrahydrodipicolinate + NADP(+) + H2O = (2S,4S)-4-hydroxy-2,3,4,5-tetrahydrodipicolinate + NADPH + H(+). Its pathway is amino-acid biosynthesis; L-lysine biosynthesis via DAP pathway; (S)-tetrahydrodipicolinate from L-aspartate: step 4/4. Catalyzes the conversion of 4-hydroxy-tetrahydrodipicolinate (HTPA) to tetrahydrodipicolinate. The protein is 4-hydroxy-tetrahydrodipicolinate reductase of Shewanella loihica (strain ATCC BAA-1088 / PV-4).